The following is a 214-amino-acid chain: Adenylate kinase (214 aa).

ATP is bound at residue 10–15; sequence GAGKGT. Positions 30–59 are NMP; it reads STGDMLRAAIKAGSELGNKAKAVMDAGQLV. Residues T31, R36, 57–59, 85–88, and Q92 each bind AMP; these read QLV and GFPR. The interval 122–159 is LID; it reads GRRVHSGSGRVYHLVYNPPKVEGKDDVSGDDLSIRPDD. ATP-binding positions include R123 and 132-133; that span reads VY. Positions 156 and 167 each coordinate AMP. Q200 contributes to the ATP binding site.

The protein belongs to the adenylate kinase family. Monomer.

The protein resides in the cytoplasm. The enzyme catalyses AMP + ATP = 2 ADP. It functions in the pathway purine metabolism; AMP biosynthesis via salvage pathway; AMP from ADP: step 1/1. Functionally, catalyzes the reversible transfer of the terminal phosphate group between ATP and AMP. Plays an important role in cellular energy homeostasis and in adenine nucleotide metabolism. In Colwellia psychrerythraea (strain 34H / ATCC BAA-681) (Vibrio psychroerythus), this protein is Adenylate kinase.